Consider the following 634-residue polypeptide: MTNSNLRTENHFDYVKISIASPQRIMDWGQRTLPNGQVVGEVTKPETINYRTLKPEMDGLFCEKIFGPSKDWECHCGKYKRVRHRGIVCERCGVEVTESRVRRHRMGYIKLAAPVSHVWYLKGIPSYVAILLDIPLRDVEQIVYFNCYVVLDVGDHKDLKYKQLLTEDEWLEIEDEVYAEDSTIENEPVVGIGAEALKQLLEDLDLNQIAEELREEITNSKGQKRAKLIKRIRVIDNFLATNAKPEWMVLDAIPVIPPDLRPMVQLDGGRFATSDLNDLYRRVINRNNRLARLQEILAPEIIVRNEKRMLQEAVDALIDNGRRGRTVVGANNRALKSLSDIIEGKQGRFRQNLLGKRVDYSGRSVIVVGPKLKMHQCGLPKEMAIELFQPFVIHRLIRQNIVNNIKAAKKLIQKGDDEVMQVLQEVIEGHPILLNRAPTLHRLGIQAFEPKLVGGRAIQLHPLVCPAFNADFDGDQMAVHVPLALEAQTEARMLMLASNNILSPATGEPIVTPSQDMVLGSYYLTALQPNFKKPNFGDNQKTYASLEDVIFAFEDKRVGLHEWVWVRFNGEVDDDEEANKPKESKELEDGSRLETWNFRRDRFDSQNNLISRFILTTVGRVVMNHTIIDSVSKT.

Zn(2+) contacts are provided by Cys-74, Cys-76, Cys-89, and Cys-92. 3 residues coordinate Mg(2+): Asp-471, Asp-473, and Asp-475.

It belongs to the RNA polymerase beta' chain family. RpoC1 subfamily. In cyanobacteria the RNAP catalytic core is composed of 2 alpha, 1 beta, 1 beta', 1 gamma and 1 omega subunit. When a sigma factor is associated with the core the holoenzyme is formed, which can initiate transcription. It depends on Mg(2+) as a cofactor. Zn(2+) serves as cofactor.

It catalyses the reaction RNA(n) + a ribonucleoside 5'-triphosphate = RNA(n+1) + diphosphate. Functionally, DNA-dependent RNA polymerase catalyzes the transcription of DNA into RNA using the four ribonucleoside triphosphates as substrates. The chain is DNA-directed RNA polymerase subunit gamma from Prochlorococcus marinus subsp. pastoris (strain CCMP1986 / NIES-2087 / MED4).